The sequence spans 70 residues: DNA-directed RNA polymerase subunit epsilon (70 aa).

This sequence belongs to the RNA polymerase subunit epsilon family. RNAP is composed of a core of 2 alpha, a beta and a beta' subunit. The core is associated with a delta subunit, and at least one of epsilon or omega. When a sigma factor is associated with the core the holoenzyme is formed, which can initiate transcription.

It carries out the reaction RNA(n) + a ribonucleoside 5'-triphosphate = RNA(n+1) + diphosphate. Its function is as follows. A non-essential component of RNA polymerase (RNAP). In Lacticaseibacillus casei (strain BL23) (Lactobacillus casei), this protein is DNA-directed RNA polymerase subunit epsilon.